Reading from the N-terminus, the 413-residue chain is Dolichyl-diphosphooligosaccharide--protein glycosyltransferase 48 kDa subunit (413 aa).

The Lumenal segment spans residues 1 to 383 (GPRSLVLLEN…QYERFIPSAY (383 aa)). A helical membrane pass occupies residues 384-404 (PYYAGAFSMMVGLFMFSIVFL). Residues 405 to 413 (HMKEKEKSD) are Cytoplasmic-facing.

It belongs to the DDOST 48 kDa subunit family. As to quaternary structure, component of the oligosaccharyltransferase (OST) complex.

The protein localises to the endoplasmic reticulum. Its subcellular location is the endoplasmic reticulum membrane. It participates in protein modification; protein glycosylation. Its function is as follows. Subunit of the oligosaccharyl transferase (OST) complex that catalyzes the initial transfer of a defined glycan (Glc(3)Man(9)GlcNAc(2) in eukaryotes) from the lipid carrier dolichol-pyrophosphate to an asparagine residue within an Asn-X-Ser/Thr consensus motif in nascent polypeptide chains, the first step in protein N-glycosylation. N-glycosylation occurs cotranslationally and the complex associates with the Sec61 complex at the channel-forming translocon complex that mediates protein translocation across the endoplasmic reticulum (ER). All subunits are required for a maximal enzyme activity. Required for the assembly of both SST3A- and SS3B-containing OST complexes. This is Dolichyl-diphosphooligosaccharide--protein glycosyltransferase 48 kDa subunit from Gallus gallus (Chicken).